We begin with the raw amino-acid sequence, 486 residues long: ATP synthase subunit beta, chloroplastic (486 aa).

154 to 161 (GGAGVGKT) lines the ATP pocket.

The protein belongs to the ATPase alpha/beta chains family. In terms of assembly, F-type ATPases have 2 components, CF(1) - the catalytic core - and CF(0) - the membrane proton channel. CF(1) has five subunits: alpha(3), beta(3), gamma(1), delta(1), epsilon(1). CF(0) has four main subunits: a(1), b(1), b'(1) and c(9-12).

The protein resides in the plastid. It is found in the chloroplast thylakoid membrane. It carries out the reaction ATP + H2O + 4 H(+)(in) = ADP + phosphate + 5 H(+)(out). In terms of biological role, produces ATP from ADP in the presence of a proton gradient across the membrane. The catalytic sites are hosted primarily by the beta subunits. This Dennstaedtia punctilobula (Hay-scented fern) protein is ATP synthase subunit beta, chloroplastic.